The sequence spans 477 residues: Probable cytosolic Fe-S cluster assembly factor GL21135 (477 aa).

Residues Cys-23, Cys-69, Cys-72, Cys-75, Cys-188, Cys-244, Cys-396, and Cys-400 each contribute to the [4Fe-4S] cluster site.

This sequence belongs to the NARF family.

Functionally, component of the cytosolic iron-sulfur (Fe/S) protein assembly machinery. Required for maturation of extramitochondrial Fe/S proteins. The polypeptide is Probable cytosolic Fe-S cluster assembly factor GL21135 (Drosophila persimilis (Fruit fly)).